An 81-amino-acid polypeptide reads, in one-letter code: MQPIQIAIAALVVAIIIAIVVWSIVIIEYRKILRQRKIDRLIDRLIERAEDSGNESEGEISALVEMGVEMGHHAPWDIDDL.

The Extracellular portion of the chain corresponds to 1–6 (MQPIQI). The helical transmembrane segment at 7–27 (AIAALVVAIIIAIVVWSIVII) threads the bilayer. Over 28–81 (EYRKILRQRKIDRLIDRLIERAEDSGNESEGEISALVEMGVEMGHHAPWDIDDL) the chain is Cytoplasmic. 2 positions are modified to phosphoserine; by host CK2: S52 and S56.

It belongs to the HIV-1 VPU protein family. Homopentamer. Interacts with host CD4 and BRTC; these interactions induce proteasomal degradation of CD4. Interacts with host BST2; this interaction leads to the degradation of host BST2. Interacts with host FBXW11. Interacts with host AP1M1; this interaction plays a role in the mistrafficking and subsequent degradation of host BST2. Interacts with host RANBP2; this interaction allows Vpu to down-regulate host BLM sumoylation. Phosphorylated by host CK2. This phosphorylation is necessary for interaction with human BTRC and degradation of CD4.

It is found in the host membrane. Its activity is regulated as follows. Ion channel activity is inhibited by hexamethylene amiloride in vitro. Its function is as follows. Enhances virion budding by targeting host CD4 and Tetherin/BST2 to proteasome degradation. Degradation of CD4 prevents any unwanted premature interactions between viral Env and its host receptor CD4 in the endoplasmic reticulum. Degradation of antiretroviral protein Tetherin/BST2 is important for virion budding, as BST2 tethers new viral particles to the host cell membrane. Mechanistically, Vpu bridges either CD4 or BST2 to BTRC, a substrate recognition subunit of the Skp1/Cullin/F-box protein E3 ubiquitin ligase, induces their ubiquitination and subsequent proteasomal degradation. The alteration of the E3 ligase specificity by Vpu seems to promote the degradation of host IKBKB, leading to NF-kappa-B down-regulation and subsequent apoptosis. Acts as a viroporin that forms an oligomeric ion channel in membranes. Modulates the host DNA repair mechanisms to promote degradation of nuclear viral cDNA in cells that are already productively infected in order to suppress immune sensing and proviral hyper-integration (superinfection). Manipulates PML-NBs and modulates SUMOylation of host BLM protein thereby enhancing its DNA-end processing activity toward viral unintegrated linear DNA. Also inhibits RAD52-mediated homologous repair of viral cDNA, preventing the generation of dead-end circular forms of single copies of the long terminal repeat and permitting sustained nucleolytic attack. In Homo sapiens (Human), this protein is Protein Vpu.